Reading from the N-terminus, the 1038-residue chain is Dorsal-ventral patterning protein Sog (1038 aa).

Over 1 to 53 (MANKLRKSNAIEWATATGTVPLLERSCCHSEDAALEPQASKTSHREQAPILRH) the chain is Cytoplasmic. The helical; Signal-anchor for type II membrane protein transmembrane segment at 54-74 (LSQLSHLLIIAGLLIVCLAGV) threads the bilayer. The Extracellular segment spans residues 75–1038 (TEGRRHAPLM…QPHHQQRSSS (964 aa)). Residues 100–175 (TECQFGKVLR…LPGKCCKTCP (76 aa)) form the VWFC 1 domain. Asparagine 179 and asparagine 287 each carry an N-linked (GlcNAc...) asparagine glycan. CHRD domains lie at 197–337 (NMKH…KYTA), 339–471 (QTEL…TRAS), 474–588 (IFQT…PRPV), and 592–713 (RDSA…STKV). Residues asparagine 520, asparagine 666, asparagine 752, and asparagine 821 are each glycosylated (N-linked (GlcNAc...) asparagine). Positions 742-804 (TKCFHSGRFY…RDGECCPSCV (63 aa)) constitute a VWFC 2 domain. VWFC domains are found at residues 830 to 899 (RGCR…KICP) and 939 to 1020 (GGCK…TQCR).

It belongs to the chordin family. In terms of assembly, component of a complex composed of dpp, sog and tsg. Interacts with palmitoyltransferase Hip14. In terms of processing, palmitoylated, probably by Hip14. Cleaved by metalloproteases tok and tld. Cleavage by tok during pupal development contributes to specification of the posterior crossvein in the wing. Abuts the dorsal dpp-expressing cells in a lateral stripe 14-16 cells wide. Later in embryogenesis it is expressed in neuroectoderm and in the endoderm spaced along the anterior-posterior axis of the developing gut.

The protein localises to the golgi apparatus membrane. It is found in the cell membrane. The protein resides in the secreted. Functionally, putative negative growth factor. Antagonist of dpp, a protein involved in patterning the dorsal region and in the development of the neuroectoderm; dpp inhibition is enhanced by tsg. Required for establishment of a narrow stripe of peak levels of BMP signaling in the dorsal midline of early embryos, that will give rise to the amnioserosa. During pupal development, plays a role in specification of the posterior crossvein in the wing. Exhibits both agonist and antagonist activities towards BMP signaling during pupal wing patterning. This Drosophila melanogaster (Fruit fly) protein is Dorsal-ventral patterning protein Sog (sog).